A 446-amino-acid polypeptide reads, in one-letter code: Phosphoglucosamine mutase (446 aa).

S99 acts as the Phosphoserine intermediate in catalysis. Mg(2+) is bound by residues S99, D242, D244, and D246. Phosphoserine is present on S99.

This sequence belongs to the phosphohexose mutase family. The cofactor is Mg(2+). Activated by phosphorylation.

It catalyses the reaction alpha-D-glucosamine 1-phosphate = D-glucosamine 6-phosphate. Catalyzes the conversion of glucosamine-6-phosphate to glucosamine-1-phosphate. This is Phosphoglucosamine mutase from Campylobacter curvus (strain 525.92).